We begin with the raw amino-acid sequence, 192 residues long: Acetolactate synthase small subunit (192 aa).

In terms of domain architecture, ACT spans 29-103 (IITVKVRNEM…DTLKVSDLTD (75 aa)).

It belongs to the acetolactate synthase small subunit family. In terms of assembly, dimer of large and small chains.

The enzyme catalyses 2 pyruvate + H(+) = (2S)-2-acetolactate + CO2. It participates in amino-acid biosynthesis; L-isoleucine biosynthesis; L-isoleucine from 2-oxobutanoate: step 1/4. It functions in the pathway amino-acid biosynthesis; L-valine biosynthesis; L-valine from pyruvate: step 1/4. This is Acetolactate synthase small subunit (ilvH) from Aquifex aeolicus (strain VF5).